The chain runs to 339 residues: Glycerol-3-phosphate dehydrogenase [NAD(P)+] (339 aa).

Residues Ser15, Trp16, His36, and Lys110 each contribute to the NADPH site. Sn-glycerol 3-phosphate-binding residues include Lys110, Gly144, and Ser146. An NADPH-binding site is contributed by Ala148. Sn-glycerol 3-phosphate contacts are provided by Lys199, Asp252, Ser262, Arg263, and Asn264. Catalysis depends on Lys199, which acts as the Proton acceptor. Arg263 lines the NADPH pocket. Val287 and Glu289 together coordinate NADPH.

It belongs to the NAD-dependent glycerol-3-phosphate dehydrogenase family.

The protein resides in the cytoplasm. It catalyses the reaction sn-glycerol 3-phosphate + NAD(+) = dihydroxyacetone phosphate + NADH + H(+). It carries out the reaction sn-glycerol 3-phosphate + NADP(+) = dihydroxyacetone phosphate + NADPH + H(+). It functions in the pathway membrane lipid metabolism; glycerophospholipid metabolism. Functionally, catalyzes the reduction of the glycolytic intermediate dihydroxyacetone phosphate (DHAP) to sn-glycerol 3-phosphate (G3P), the key precursor for phospholipid synthesis. The sequence is that of Glycerol-3-phosphate dehydrogenase [NAD(P)+] from Desulfotalea psychrophila (strain LSv54 / DSM 12343).